Reading from the N-terminus, the 113-residue chain is U11-theraphotoxin-Hhn1n (113 aa).

Positions Met1–Ala21 are cleaved as a signal peptide. Residues Asp22–Arg74 constitute a propeptide that is removed on maturation. Basic and acidic residues predominate over residues Leu60–Asn69. The segment at Leu60–Asp83 is disordered. 2 disulfide bridges follow: Cys75–Cys90 and Cys89–Cys110.

Belongs to the neurotoxin 14 (magi-1) family. 01 (HNTX-16) subfamily. As to expression, expressed by the venom gland.

It is found in the secreted. In terms of biological role, probable ion channel inhibitor. This Cyriopagopus hainanus (Chinese bird spider) protein is U11-theraphotoxin-Hhn1n.